Here is a 241-residue protein sequence, read N- to C-terminus: uncharacterized protein (241 aa).

This is an uncharacterized protein from Ictaluridae (bullhead catfishes).